The primary structure comprises 1151 residues: Elicitor of plant defense protein 1 (1151 aa).

Disordered regions lie at residues 22 to 130 (YQDP…TLGE), 178 to 197 (ERIRAEESDSGRLSPLRSIK), and 236 to 255 (NYNSVIPPPEPLNTDPDMHP). Residues 39-49 (IIEDGEPEDEW) are compositionally biased toward acidic residues. Positions 64–99 (QNSASRLSKMSLTERFSIQTLDDTDGNTKSNRSSAT) are enriched in polar residues. The span at 104 to 122 (NPPDFSNGNDDSNGNSQNP) shows a compositional bias: low complexity. The span at 178–187 (ERIRAEESDS) shows a compositional bias: basic and acidic residues. Positions 242–500 (PPPEPLNTDP…NLCTEAFNPL (259 aa)) constitute a uDENN domain. In terms of domain architecture, cDENN spans 524–656 (EIPGSRTIDI…ARRKLMSLLQ (133 aa)). Residues 658 to 1019 (AAPHKLRYGV…DREMQPANDA (362 aa)) enclose the dDENN domain. Polar residues-rich tracts occupy residues 695–711 (STPKSTLGKWVSQSSSG) and 744–760 (TSKSGKTSPQSSVSPVS). Residues 695-809 (STPKSTLGKW…SSSFGVDKHP (115 aa)) are disordered. Positions 784 to 798 (LREKRSGHFGEEKMR) are enriched in basic and acidic residues. Residues 886–934 (GHCFNYMPKDNTSMCTICNDLAEGDGVYRCTGCKIVSHGRCLGYCSLIC) form a Phorbol-ester/DAG-type zinc finger.

This sequence belongs to the EPD1 elicitor family.

It localises to the secreted. The protein localises to the host cell. Functionally, acts as an elicitor that triggers cell death and defense responses in the host plants. The sequence is that of Elicitor of plant defense protein 1 from Gibberella zeae (strain ATCC MYA-4620 / CBS 123657 / FGSC 9075 / NRRL 31084 / PH-1) (Wheat head blight fungus).